A 385-amino-acid polypeptide reads, in one-letter code: Sesquiterpene alcohol synthase (385 aa).

Mg(2+)-binding residues include Asp123 and Asp127. The short motif at 123 to 127 (DDISD) is the DDXXD motif element.

It belongs to the terpene synthase family. Mg(2+) serves as cofactor. In terms of tissue distribution, specifically expressed in tissues lining the cuticle of the abdominal sternites of mature males.

It carries out the reaction (2E,6E)-farnesyl diphosphate + H2O = (1S,6S,7R)-sesquipiperitol + diphosphate. It functions in the pathway pheromone biosynthesis. Functionally, sesquiterpene alcohol synthase that catalyzes the formation of (1S,6S,7R)-sesquipiperitol, a terpene intermediate in murgantiol biosynthesis, a male-released aggregation pheromone. The chain is Sesquiterpene alcohol synthase from Murgantia histrionica (Harlequin bug).